Here is a 1020-residue protein sequence, read N- to C-terminus: Vacuolar membrane protease (1020 aa).

Over 1-11 the chain is Cytoplasmic; sequence MKCHNPFGFRV. The helical transmembrane segment at 12-32 threads the bilayer; that stretch reads GPVTFWTIIIYLALLVPLLWI. The Vacuolar segment spans residues 33–410; it reads HETVPPAPSS…GFAVFGLRGL (378 aa). N-linked (GlcNAc...) asparagine glycans are attached at residues N50, N94, and N130. Zn(2+) contacts are provided by H191 and D203. The active-site Proton acceptor is the E237. Zn(2+)-binding residues include E238, E263, and H336. Residues 411–431 traverse the membrane as a helical segment; sequence FAWSLTLLIVSPLILAILVFI. The Cytoplasmic portion of the chain corresponds to 432–467; the sequence is LNRHDKLYFFSRKINVHNEGSEDPVSIGGFRGFTRF. The helical transmembrane segment at 468-488 threads the bilayer; sequence PIAVGFSGALTLASAFLLTKI. Over 489–491 the chain is Vacuolar; sequence NPM. A helical transmembrane segment spans residues 492–512; that stretch reads IVYSSEYAVWGMMLSLFYVSL. The Cytoplasmic segment spans residues 513–529; it reads WMTLKGSSAVRPSALQR. A helical membrane pass occupies residues 530 to 550; it reads GYIHIWLFIVSWGLLIVVAVT. Topologically, residues 551–561 are vacuolar; it reads EDRLKIASGYP. The chain crosses the membrane as a helical span at residues 562 to 582; the sequence is VVFLHSALFLSTVISFLELFG. At 583–690 the chain is on the cytoplasmic side; the sequence is LTKKHDYARR…RLPGWTWILQ (108 aa). A disordered region spans residues 609-648; it reads DDALIAPDTPNDEAEDSDGEDSEHEPTETTPLRAGGDSRV. Acidic residues predominate over residues 618–631; that stretch reads PNDEAEDSDGEDSE. Residues 691 to 711 traverse the membrane as a helical segment; the sequence is FLLLAPINVILWGQIGLFAVA. At 712–724 the chain is on the vacuolar side; it reads ATQAGGADGGSVL. Residues 725-745 traverse the membrane as a helical segment; sequence TTYLIIAVLSIVILVPLAPFI. At 746–750 the chain is on the cytoplasmic side; it reads HRVHY. A helical membrane pass occupies residues 751 to 771; it reads YVPIILFAAFAGTLIYNLIAF. At 772 to 1020 the chain is on the vacuolar side; that stretch reads PFSANNRYKI…VGLVRPVKRF (249 aa). 3 N-linked (GlcNAc...) asparagine glycosylation sites follow: N851, N868, and N873.

Belongs to the peptidase M28 family. Requires Zn(2+) as cofactor.

The protein resides in the vacuole membrane. Functionally, may be involved in vacuolar sorting and osmoregulation. The polypeptide is Vacuolar membrane protease (Verticillium alfalfae (strain VaMs.102 / ATCC MYA-4576 / FGSC 10136) (Verticillium wilt of alfalfa)).